The chain runs to 156 residues: Small ribosomal subunit protein uS7 (156 aa).

The protein belongs to the universal ribosomal protein uS7 family. In terms of assembly, part of the 30S ribosomal subunit. Contacts proteins S9 and S11.

One of the primary rRNA binding proteins, it binds directly to 16S rRNA where it nucleates assembly of the head domain of the 30S subunit. Is located at the subunit interface close to the decoding center, probably blocks exit of the E-site tRNA. This chain is Small ribosomal subunit protein uS7, found in Erythrobacter litoralis (strain HTCC2594).